The following is a 502-amino-acid chain: Lysine--tRNA ligase (502 aa).

Mg(2+)-binding residues include Glu-403 and Glu-410.

It belongs to the class-II aminoacyl-tRNA synthetase family. In terms of assembly, homodimer. Requires Mg(2+) as cofactor.

It is found in the cytoplasm. The catalysed reaction is tRNA(Lys) + L-lysine + ATP = L-lysyl-tRNA(Lys) + AMP + diphosphate. This Synechococcus sp. (strain CC9902) protein is Lysine--tRNA ligase.